We begin with the raw amino-acid sequence, 586 residues long: MATTIPFDFRSHCVQLLAQAVKQVLPEETEIHIELQRPKQMDHGDYSTNLAMKLAKRLRRNPLELAKVLIGALPDSPYVGKTVVAGGGFVNFFLKKTAKQQFLLTVLQAADSFGHSKLGAGKTIQIEFVSANPTGPLHVGHGRGAAFGASLANIMAAAGYAVTREFYVNDAGRQMDILALSTWLRYLDLCGIALPFPSNAYQGRYVVDMALEIHRIHGDRYAHYSDSPTQQLAEINAKAAADGEDEYLDNLITAAKSILGEDYAYLHNFVLTEQLNDCRNDLMEFGVEFENWFSEQSLFDSGMVARAVQLLDDKKLLYRQDGALWFQSTGFGDEKDRVVQRENGQYTYFASDIAYHLSKYERGFDYMLNIWGADHHGYISRVKGAIEALSLDSDKLEIALVQFAVLYRDGNKISMSTRSGEFVTLRQLRQEVGNDAARFFYVLRKSDQHLDFDLDLAKSQSNDNPVYYVQYAHARICSVLEQWGGAVDIFGRAETELLTNPAELVLLQKIIDFPDTIEAAAKEHAPHLIAFFLRELASEFHSYYNSTRFLIPDEALKIARLALISAVCQVLSKGLSLLGVTSPRKM.

Positions 131-141 match the 'HIGH' region motif; sequence ANPTGPLHVGH.

Belongs to the class-I aminoacyl-tRNA synthetase family. As to quaternary structure, monomer.

The protein localises to the cytoplasm. The catalysed reaction is tRNA(Arg) + L-arginine + ATP = L-arginyl-tRNA(Arg) + AMP + diphosphate. The chain is Arginine--tRNA ligase from Nitrosomonas eutropha (strain DSM 101675 / C91 / Nm57).